The chain runs to 265 residues: PBSX phage terminase small subunit (265 aa).

The segment at 241–265 (KQKAEKTDDSQEPIEIMIKRKERKS) is disordered.

It to B.subtilis YqaS and B.subtilis phage SPP1 terminase small subunit. As to quaternary structure, dimer of a small and a large subunit.

Functionally, functions as a terminase. The sequence is that of PBSX phage terminase small subunit (xtmA) from Bacillus subtilis (strain 168).